A 565-amino-acid polypeptide reads, in one-letter code: Thiol:disulfide interchange protein DsbD (565 aa).

The signal sequence occupies residues 1-19 (MAQRIFTLILLLCSTSVFA). 2 disulfide bridges follow: Cys122/Cys128 and Cys182/Cys304. Helical transmembrane passes span 163 to 183 (LPFS…TPCV), 208 to 228 (LLTF…GLVV), 243 to 263 (YVLI…FGLF), 296 to 316 (IAGL…LLYI), 323 to 343 (WLGG…LMLI), 357 to 377 (WMEQ…VFLL), and 384 to 404 (VWGL…AFIT). Positions 434–565 (WAFGATHTAQ…FSAHLRDRQP (132 aa)) constitute a Thioredoxin domain. Cys480 and Cys483 are joined by a disulfide.

The protein belongs to the thioredoxin family. DsbD subfamily.

The protein resides in the cell inner membrane. It carries out the reaction [protein]-dithiol + NAD(+) = [protein]-disulfide + NADH + H(+). It catalyses the reaction [protein]-dithiol + NADP(+) = [protein]-disulfide + NADPH + H(+). In terms of biological role, required to facilitate the formation of correct disulfide bonds in some periplasmic proteins and for the assembly of the periplasmic c-type cytochromes. Acts by transferring electrons from cytoplasmic thioredoxin to the periplasm. This transfer involves a cascade of disulfide bond formation and reduction steps. The chain is Thiol:disulfide interchange protein DsbD from Shigella flexneri serotype 5b (strain 8401).